Reading from the N-terminus, the 364-residue chain is Dihydroorotate dehydrogenase (quinone) (364 aa).

FMN-binding positions include 61–65 (AGYDK) and Thr-85. Lys-65 contributes to the substrate binding site. 110-114 (NRLGF) contacts substrate. Positions 139 and 170 each coordinate FMN. Residue Asn-170 coordinates substrate. Ser-173 serves as the catalytic Nucleophile. Asn-175 contributes to the substrate binding site. Residues Lys-215 and Ser-243 each coordinate FMN. 244 to 245 (NT) contributes to the substrate binding site. FMN is bound by residues Gly-266, Gly-295, and 316–317 (YT).

This sequence belongs to the dihydroorotate dehydrogenase family. Type 2 subfamily. As to quaternary structure, monomer. FMN serves as cofactor.

The protein localises to the cell membrane. The enzyme catalyses (S)-dihydroorotate + a quinone = orotate + a quinol. Its pathway is pyrimidine metabolism; UMP biosynthesis via de novo pathway; orotate from (S)-dihydroorotate (quinone route): step 1/1. Functionally, catalyzes the conversion of dihydroorotate to orotate with quinone as electron acceptor. In Brucella anthropi (strain ATCC 49188 / DSM 6882 / CCUG 24695 / JCM 21032 / LMG 3331 / NBRC 15819 / NCTC 12168 / Alc 37) (Ochrobactrum anthropi), this protein is Dihydroorotate dehydrogenase (quinone).